The following is a 91-amino-acid chain: MGRSLKKGPFVDGHLMKKVEALNATNDKKVVKTWSRRSTIFPDFIGHTFAVYDGRKHVPVYVSEDMVGHKLGEFAPTRTYKGHAADKKTRR.

The protein belongs to the universal ribosomal protein uS19 family.

Its function is as follows. Protein S19 forms a complex with S13 that binds strongly to the 16S ribosomal RNA. This chain is Small ribosomal subunit protein uS19, found in Shouchella clausii (strain KSM-K16) (Alkalihalobacillus clausii).